The primary structure comprises 143 residues: HTH-type transcriptional regulator BudR (143 aa).

Positions Met-1–Thr-58 constitute an HTH lysR-type domain. Residues Phe-18–Lys-37 constitute a DNA-binding region (H-T-H motif).

It belongs to the LysR transcriptional regulatory family.

Regulator of the budABC operon for 2,3-butanediol synthesis. In Klebsiella aerogenes (Enterobacter aerogenes), this protein is HTH-type transcriptional regulator BudR (budR).